The chain runs to 285 residues: Glutamate racemase (285 aa).

Substrate is bound by residues D28 to S29 and Y60 to G61. C92 serves as the catalytic Proton donor/acceptor. Substrate is bound at residue N93–T94. Residue C204 is the Proton donor/acceptor of the active site. T205 to H206 lines the substrate pocket.

Belongs to the aspartate/glutamate racemases family.

The enzyme catalyses L-glutamate = D-glutamate. It participates in cell wall biogenesis; peptidoglycan biosynthesis. In terms of biological role, provides the (R)-glutamate required for cell wall biosynthesis. The sequence is that of Glutamate racemase from Escherichia fergusonii (strain ATCC 35469 / DSM 13698 / CCUG 18766 / IAM 14443 / JCM 21226 / LMG 7866 / NBRC 102419 / NCTC 12128 / CDC 0568-73).